Consider the following 553-residue polypeptide: Putative transport protein AHA_3492 (553 aa).

5 helical membrane-spanning segments follow: residues 4–24 (IALS…LGNW), 29–49 (VGLG…FAGL), 65–85 (FGLI…FFSS), 95–115 (GFAA…HQLF), and 158–178 (MGYA…MWLI). RCK C-terminal domains are found at residues 191-276 (AQFE…VLGE) and 279-361 (ETSL…VVGN). A run of 6 helical transmembrane segments spans residues 371 to 391 (MLPV…PFYL), 403 to 425 (AGGP…LYWF), 439 to 459 (IVLF…DTLI), 465 to 485 (AWMM…GVLA), 493 to 513 (YLTL…LAFA), and 533 to 553 (LVMF…WAGA).

This sequence belongs to the AAE transporter (TC 2.A.81) family. YidE subfamily.

The protein localises to the cell membrane. The protein is Putative transport protein AHA_3492 of Aeromonas hydrophila subsp. hydrophila (strain ATCC 7966 / DSM 30187 / BCRC 13018 / CCUG 14551 / JCM 1027 / KCTC 2358 / NCIMB 9240 / NCTC 8049).